Here is a 379-residue protein sequence, read N- to C-terminus: MKRLALIGSTGSIGKQVLQVIREIPDAFVIETLAAYGRNRESLISQIREFSPRVVAVRDETTYKELRKLFPHIEILSGEEGLIAVATAASVDMTIVASSGIDALPAVMASIQERKTIALANKESLVAAGELVTTLAKKNHVQILPIDSEHNALFQCLEGRDPSTIKKLILTASGGPLRNKSKEELQKVTLQEVLKHPIWDMGPKITVDSSTLVNKGLEIIEAFWLFGLQAVEIEAVIHPQSLIHGMVEFCDGTILSVMNPPSMLFPIQHVLTFPDRYPSIISGLNFLTNQTLEFLPIDDERFPSIRLAKDVLREGGSMGCFFNGANEALVQRFLSGEIAWYQIVSKLQTLMDKYVVRSCLSLEDILQVDSEARALASEC.

Residues T10, G11, S12, I13, R38, N39, and N121 each coordinate NADPH. K122 contacts 1-deoxy-D-xylulose 5-phosphate. Residue E123 participates in NADPH binding. D147 serves as a coordination point for Mn(2+). S148, E149, S173, and H196 together coordinate 1-deoxy-D-xylulose 5-phosphate. Residue E149 participates in Mn(2+) binding. Residue G202 participates in NADPH binding. S209, N214, K215, and E218 together coordinate 1-deoxy-D-xylulose 5-phosphate. Mn(2+) is bound at residue E218.

The protein belongs to the DXR family. The cofactor is Mg(2+). Requires Mn(2+) as cofactor.

It catalyses the reaction 2-C-methyl-D-erythritol 4-phosphate + NADP(+) = 1-deoxy-D-xylulose 5-phosphate + NADPH + H(+). It participates in isoprenoid biosynthesis; isopentenyl diphosphate biosynthesis via DXP pathway; isopentenyl diphosphate from 1-deoxy-D-xylulose 5-phosphate: step 1/6. Catalyzes the NADPH-dependent rearrangement and reduction of 1-deoxy-D-xylulose-5-phosphate (DXP) to 2-C-methyl-D-erythritol 4-phosphate (MEP). In Chlamydia muridarum (strain MoPn / Nigg), this protein is 1-deoxy-D-xylulose 5-phosphate reductoisomerase.